Reading from the N-terminus, the 360-residue chain is D-alanine--D-alanine ligase (360 aa).

The region spanning 134–343 (KILAQRVGVP…YTELITRLIE (210 aa)) is the ATP-grasp domain. 169-224 (AEKLGRDMFVKPSNQGSSVGVSHVTNADEYAAALKEAFKYDDKVLVEETVPGTEVE) serves as a coordination point for ATP. Residues Asp-297, Glu-310, and Asn-312 each coordinate Mg(2+).

It belongs to the D-alanine--D-alanine ligase family. The cofactor is Mg(2+). Mn(2+) serves as cofactor.

The protein localises to the cytoplasm. It catalyses the reaction 2 D-alanine + ATP = D-alanyl-D-alanine + ADP + phosphate + H(+). Its pathway is cell wall biogenesis; peptidoglycan biosynthesis. Functionally, cell wall formation. This Lactobacillus helveticus (strain DPC 4571) protein is D-alanine--D-alanine ligase.